The chain runs to 192 residues: Cytochrome b-245 light chain (192 aa).

Residues 2–7 (GQIEWA) are Cytoplasmic-facing. Residues 8–30 (MWANEQALASGLILITGGIVATA) form a helical membrane-spanning segment. Residues 31–35 (GQFAQ) are Extracellular-facing. The helical transmembrane segment at 36-53 (WYLGAYSIAAGVLICLLE) threads the bilayer. Over 54-69 (YPRGKRSKGSTMERCG) the chain is Cytoplasmic. Residues 70–80 (QKYLTRAVKVF) lie within the membrane without spanning it. The Cytoplasmic portion of the chain corresponds to 81-86 (GPLTSN). Residues 87–104 (YYIRAFLHLGLSVPAGFL) traverse the membrane as a helical segment. Residue leucine 105 is a topological domain, extracellular. The helical transmembrane segment at 106-126 (ATILGTACLAIASSIYLLAAI) threads the bilayer. Residues 127–192 (HGEHWTPIET…NPMPVTDEVV (66 aa)) are Cytoplasmic-facing. A disordered region spans residues 134–192 (IETKPKERPQVGGTIKQPPSNPPPRPPAEARKKPSEEEVAGVPGGGPQENPMPVTDEVV). Phosphothreonine is present on threonine 147. Lysine 149 participates in a covalent cross-link: Glycyl lysine isopeptide (Lys-Gly) (interchain with G-Cter in ubiquitin). Serine 168 carries the post-translational modification Phosphoserine.

It belongs to the p22phox family. In terms of assembly, component of the phagocyte NADPH oxidase core complex/cytochrome b558 complex, composed of CYBB (heavy chain (beta)) and CYBA (light chain (alpha)). Component of the phagocyte NADPH oxidase complex composed of an obligatory core heterodimer formed by the membrane proteins CYBA and CYBB and the cytosolic regulatory subunits NCF1/p47-phox, NCF2/p67-phox, NCF4/p40-phox and the small GTPase RAC1 or RAC2. Interacts with NCF1 (via SH3 domain). Interacts with SH3PXD2A. Interacts with DUOX1, DUOX2 and TPO. Interacts with NOX4; this interaction mediates superoxide generation. Interacts with calprotectin (S100A8/9). Interacts with GBP7. Interacts with NOXO1. Forms a heterodimer with NOX3 and is essential for activity and cell membrane localization of NOX3. Interacts with NOX1. Post-translationally, phosphorylation at Thr-147 enhances NADPH oxidase activity by promoting NCF1/p47-phox binding. In terms of processing, ubiquitinated at Lys-149 likely by RNF145.

It is found in the cell membrane. Its function is as follows. Subunit of NADPH oxidase complexes that is required for the NADPH oxidase activity that generates, in various cell types, superoxide from molecular oxygen utilizing NADPH as an electron donor. Subunit of the phagocyte NADPH oxidase complex that mediates the transfer of electrons from cytosolic NADPH to O2 to produce the superoxide anion (O2(-)). In the activated complex, electrons are first transferred from NADPH to flavin adenine dinucleotide (FAD) and subsequently transferred via two heme molecules to molecular oxygen, producing superoxide through an outer-sphere reaction. Activation of the NADPH oxidase complex is initiated by the assembly of cytosolic subunits of the NADPH oxidase complex with the core NADPH oxidase complex to form a complex at the plasma membrane or phagosomal membrane. This activation process is initiated by phosphorylation dependent binding of the cytosolic NCF1/p47-phox subunit to the C-terminus of CYBA/p22-phox. Aassociates with NOX3 to form a functional NADPH oxidase constitutively generating superoxide. This is Cytochrome b-245 light chain from Tursiops truncatus (Atlantic bottle-nosed dolphin).